The chain runs to 74 residues: DNA-directed RNA polymerase subunit omega (74 aa).

The protein belongs to the RNA polymerase subunit omega family. In terms of assembly, the RNAP catalytic core consists of 2 alpha, 1 beta, 1 beta' and 1 omega subunit. When a sigma factor is associated with the core the holoenzyme is formed, which can initiate transcription.

It catalyses the reaction RNA(n) + a ribonucleoside 5'-triphosphate = RNA(n+1) + diphosphate. Promotes RNA polymerase assembly. Latches the N- and C-terminal regions of the beta' subunit thereby facilitating its interaction with the beta and alpha subunits. This Solidesulfovibrio magneticus (strain ATCC 700980 / DSM 13731 / RS-1) (Desulfovibrio magneticus) protein is DNA-directed RNA polymerase subunit omega.